The following is a 282-amino-acid chain: (4-alkanoyl-5-oxo-2,5-dihydrofuran-3-yl)methyl phosphate reductase (282 aa).

Residue 6 to 11 coordinates NADP(+); sequence GATGAV.

The protein belongs to the NmrA-type oxidoreductase family.

It catalyses the reaction a [(3S,4R)-4-alkanoyl-5-oxooxolan-3-yl]methyl phosphate + NADP(+) = a (4-alkanoyl-5-oxo-2,5-dihydrofuran-3-yl)methyl phosphate + NADPH + H(+). The enzyme catalyses [(3S,4R)-4-(6-methylheptanoyl)-5-oxooxolan-3-yl]methyl phosphate + NADP(+) = [4-(6-methylheptanoyl)-5-oxo-2H-furan-3-yl]methyl phosphate + NADPH + H(+). In terms of biological role, involved in the biosynthesis of A factor (2-isocapryloyl-3R-hydroxymethyl-gamma-butyrolactone), a gamma-butyrolactone autoregulator that triggers secondary metabolism and morphogenesis in Streptomyces. Catalyzes the reduction of the butenolide phosphate produced by nonenzymatic intramolecular condensation of the 8-methyl-3-oxononanoyl-DHAP ester. The sequence is that of (4-alkanoyl-5-oxo-2,5-dihydrofuran-3-yl)methyl phosphate reductase from Streptomyces griseus subsp. griseus (strain JCM 4626 / CBS 651.72 / NBRC 13350 / KCC S-0626 / ISP 5235).